The sequence spans 54 residues: Large ribosomal subunit protein bL33B (54 aa).

It belongs to the bacterial ribosomal protein bL33 family.

In Mycolicibacterium smegmatis (strain ATCC 700084 / mc(2)155) (Mycobacterium smegmatis), this protein is Large ribosomal subunit protein bL33B.